Reading from the N-terminus, the 216-residue chain is Large ribosomal subunit protein uL1z (216 aa).

The protein belongs to the universal ribosomal protein uL1 family. In terms of assembly, interacts with the GTPase NUG2.

The polypeptide is Large ribosomal subunit protein uL1z (RPL10AA) (Arabidopsis thaliana (Mouse-ear cress)).